The following is a 362-amino-acid chain: Putative transport protein BB_0006 (362 aa).

8 helical membrane passes run 20 to 40 (FYCI…EAVF), 43 to 63 (LAIS…LARF), 68 to 88 (FLIV…IFSF), 144 to 164 (EIIG…FLLS), 212 to 232 (ILVF…WAVL), 234 to 254 (FVFN…IVIT), 265 to 285 (IVLY…NILE), and 304 to 326 (LFFW…TVIV).

It belongs to the autoinducer-2 exporter (AI-2E) (TC 2.A.86) family.

The protein resides in the cell membrane. The chain is Putative transport protein BB_0006 from Borreliella burgdorferi (strain ATCC 35210 / DSM 4680 / CIP 102532 / B31) (Borrelia burgdorferi).